A 120-amino-acid polypeptide reads, in one-letter code: Ribonuclease P protein component 2 (120 aa).

Belongs to the eukaryotic/archaeal RNase P protein component 2 family. In terms of assembly, homodimer in solution. Component of RNase P which consists of a catalytic RNA component and at least 5 protein subunits. Forms a heterotetrameric subcomplex with Rnp3. Reconstituted enzyme missing individual protein subunits is suboptimally active, showing each subunit contributes to optimization of activity.

Its subcellular location is the cytoplasm. The enzyme catalyses Endonucleolytic cleavage of RNA, removing 5'-extranucleotides from tRNA precursor.. Its function is as follows. Part of ribonuclease P, a protein complex that generates mature tRNA molecules by cleaving their 5'-ends. This Pyrococcus horikoshii (strain ATCC 700860 / DSM 12428 / JCM 9974 / NBRC 100139 / OT-3) protein is Ribonuclease P protein component 2.